The primary structure comprises 620 residues: Glutathione-regulated potassium-efflux system protein KefC (620 aa).

Residues 1–3 (MDS) are Periplasmic-facing. The helical transmembrane segment at 4–24 (HTLVQALIYLGSAALIVPIAV) threads the bilayer. Position 25 (R25) is a topological domain, cytoplasmic. The chain crosses the membrane as a helical span at residues 26–46 (LGLGSVLGYLIAGCIIGPWGL). Topologically, residues 47 to 53 (RLVTDAE) are periplasmic. Residues 54-74 (SILHFAEIGVVLMLFIIGLEL) traverse the membrane as a helical segment. Topologically, residues 75 to 89 (DPQRLWKLRAAVFGG) are cytoplasmic. The chain crosses the membrane as a helical span at residues 90–110 (GALQMVICGGLLGLFCMLLGL). Residues 111 to 113 (RWQ) are Periplasmic-facing. A helical transmembrane segment spans residues 114–134 (VAELIGMTLALSSTAIAMQAM). Topologically, residues 135-148 (NERNLMVTQMGRSA) are cytoplasmic. The helical transmembrane segment at 149 to 169 (FAVLLFQDIAAIPLVAMIPLL) threads the bilayer. The Periplasmic portion of the chain corresponds to 170-177 (AASSASTT). A helical transmembrane segment spans residues 178–198 (MGAFALSALKVAGALVLVVLL). Over 199 to 213 (GRYVTRPALRFVARS) the chain is Cytoplasmic. A helical transmembrane segment spans residues 214-233 (GLREVFSAVALFLVFGFGLL). The Periplasmic segment spans residues 234–236 (LEE). A helical membrane pass occupies residues 237–254 (VGLSMAMGAFLAGVLLAS). Residues 255–269 (SEYRHALESDIEPFK) are Cytoplasmic-facing. The helical transmembrane segment at 270–290 (GLLLGLFFIGVGMSIDFGTLI) threads the bilayer. Topologically, residues 291–293 (ENP) are periplasmic. The chain crosses the membrane as a helical span at residues 294–314 (LRIVILLLGFLIIKIAMLWLI). Over 315–326 (ARPLQVPNKQRR) the chain is Cytoplasmic. The chain crosses the membrane as a helical span at residues 327–347 (WFAVLLGQGSEFAFVVFGAAQ). The Periplasmic portion of the chain corresponds to 348–358 (MANVLEPEWAK). Residues 359–379 (SLTLAVALSMAATPILLVILN) traverse the membrane as a helical segment. The Cytoplasmic portion of the chain corresponds to 380-620 (RLEQSSTEEA…ADEPETKPSS (241 aa)). Positions 399–518 (QPRVIIAGFG…AGVEKPERET (120 aa)) constitute an RCK N-terminal domain. Residues 597–620 (GWQGTEEGKHTGNMADEPETKPSS) are disordered.

The protein belongs to the monovalent cation:proton antiporter 2 (CPA2) transporter (TC 2.A.37) family. KefC subfamily. As to quaternary structure, homodimer. Interacts with the regulatory subunit KefF.

It is found in the cell inner membrane. In terms of biological role, pore-forming subunit of a potassium efflux system that confers protection against electrophiles. Catalyzes K(+)/H(+) antiport. This chain is Glutathione-regulated potassium-efflux system protein KefC, found in Escherichia coli O157:H7.